A 164-amino-acid chain; its full sequence is Transcription elongation factor GreA (164 aa).

The protein belongs to the GreA/GreB family.

In terms of biological role, necessary for efficient RNA polymerase transcription elongation past template-encoded arresting sites. The arresting sites in DNA have the property of trapping a certain fraction of elongating RNA polymerases that pass through, resulting in locked ternary complexes. Cleavage of the nascent transcript by cleavage factors such as GreA or GreB allows the resumption of elongation from the new 3'terminus. GreA releases sequences of 2 to 3 nucleotides. This is Transcription elongation factor GreA from Helicobacter pylori (strain Shi470).